The chain runs to 86 residues: High affinity immunoglobulin epsilon receptor subunit gamma (86 aa).

The N-terminal stretch at 1-18 (MIPAVVLLLLLLVEQAAA) is a signal peptide. Residues 19–23 (LGEPQ) lie on the Extracellular side of the membrane. A helical membrane pass occupies residues 24–44 (LCYILDAILFLYGIVLTLLYC). Residues 45–86 (RLKIQVRKAAIASYEKSDGVYTGLSTRNQETYETLKHEKPPQ) lie on the Cytoplasmic side of the membrane. The 29-residue stretch at 54-82 (AIASYEKSDGVYTGLSTRNQETYETLKHE) folds into the ITAM domain. Tyr65 carries the post-translational modification Phosphotyrosine. Ser69 is modified (phosphoserine). Tyr76 carries the post-translational modification Phosphotyrosine. At Thr78 the chain carries Phosphothreonine.

Belongs to the CD3Z/FCER1G family. As to quaternary structure, igE Fc receptor is a tetramer of an alpha chain, a beta chain, and two disulfide linked gamma chains. Associates with FCGR1A; forms a functional signaling complex. The signaling subunit of immunoglobulin gamma (IgG) Fc receptor complex. As a homodimer or a heterodimer of CD247 and FCER1G, associates with the ligand binding subunit FCGR3A to form a functional receptor complex. Associates with CLEC6A. Interacts with CLEC4E. Interacts (via ITAM domain) with SYK (via SH2 domains); activates SYK, enabling integrin-mediated activation of neutrophils and macrophages. Interacts with CSF2RB and recruits SYK in response to IL3 stimulation; this interaction is direct. Interacts with CD300LH; the interaction may be indirect. Interacts with CD300LD. Interacts with TARM1.

It localises to the cell membrane. Functionally, adapter protein containing an immunoreceptor tyrosine-based activation motif (ITAM) that transduces activation signals from various immunoreceptors. As a component of the high-affinity immunoglobulin E (IgE) receptor, mediates allergic inflammatory signaling in mast cells. As a constitutive component of interleukin-3 receptor complex, selectively mediates interleukin 4/IL4 production by basophils priming T-cells toward effector T-helper 2 subset. Associates with pattern recognition receptors CLEC4D and CLEC4E to form a functional signaling complex in myeloid cells. Binding of mycobacterial trehalose 6,6'-dimycolate (TDM) to this receptor complex leads to phosphorylation of ITAM, triggering activation of SYK, CARD9 and NF-kappa-B, consequently driving maturation of antigen-presenting cells and shaping antigen-specific priming of T-cells toward effector T-helper 1 and T-helper 17 cell subtypes. May function cooperatively with other activating receptors. Functionally linked to integrin beta-2/ITGB2-mediated neutrophil activation. Also involved in integrin alpha-2/ITGA2-mediated platelet activation. In Macaca fascicularis (Crab-eating macaque), this protein is High affinity immunoglobulin epsilon receptor subunit gamma (FCER1G).